A 96-amino-acid polypeptide reads, in one-letter code: Large ribosomal subunit protein bL21 (96 aa).

Over residues 73 to 84 the composition is skewed to basic residues; sequence KRRKRYQSRNGH. The disordered stretch occupies residues 73–96; sequence KRRKRYQSRNGHRQQMTQIEVVSL. Over residues 85–96 the composition is skewed to polar residues; it reads RQQMTQIEVVSL.

It belongs to the bacterial ribosomal protein bL21 family. In terms of assembly, part of the 50S ribosomal subunit. Contacts protein L20.

Functionally, this protein binds to 23S rRNA in the presence of protein L20. This chain is Large ribosomal subunit protein bL21, found in Chlorobium phaeovibrioides (strain DSM 265 / 1930) (Prosthecochloris vibrioformis (strain DSM 265)).